The sequence spans 427 residues: Glutamate-1-semialdehyde 2,1-aminomutase (427 aa).

Lysine 265 bears the N6-(pyridoxal phosphate)lysine mark.

Belongs to the class-III pyridoxal-phosphate-dependent aminotransferase family. HemL subfamily. In terms of assembly, homodimer. Pyridoxal 5'-phosphate is required as a cofactor.

Its subcellular location is the cytoplasm. It catalyses the reaction (S)-4-amino-5-oxopentanoate = 5-aminolevulinate. The protein operates within porphyrin-containing compound metabolism; protoporphyrin-IX biosynthesis; 5-aminolevulinate from L-glutamyl-tRNA(Glu): step 2/2. This Neisseria meningitidis serogroup C / serotype 2a (strain ATCC 700532 / DSM 15464 / FAM18) protein is Glutamate-1-semialdehyde 2,1-aminomutase.